The following is a 213-amino-acid chain: Pyridoxine/pyridoxamine 5'-phosphate oxidase (213 aa).

Substrate is bound by residues 8 to 11 (RREY) and Lys-67. FMN contacts are provided by residues 62–67 (RIVLLK), 77–78 (FT), Arg-83, Lys-84, and Gln-106. Substrate contacts are provided by Tyr-124, Arg-128, and Ser-132. FMN is bound by residues 141–142 (QS) and Trp-186. A substrate-binding site is contributed by 192-194 (RLH). FMN is bound at residue Arg-196.

The protein belongs to the pyridoxamine 5'-phosphate oxidase family. As to quaternary structure, homodimer. The cofactor is FMN.

The enzyme catalyses pyridoxamine 5'-phosphate + O2 + H2O = pyridoxal 5'-phosphate + H2O2 + NH4(+). It carries out the reaction pyridoxine 5'-phosphate + O2 = pyridoxal 5'-phosphate + H2O2. It functions in the pathway cofactor metabolism; pyridoxal 5'-phosphate salvage; pyridoxal 5'-phosphate from pyridoxamine 5'-phosphate: step 1/1. Its pathway is cofactor metabolism; pyridoxal 5'-phosphate salvage; pyridoxal 5'-phosphate from pyridoxine 5'-phosphate: step 1/1. Catalyzes the oxidation of either pyridoxine 5'-phosphate (PNP) or pyridoxamine 5'-phosphate (PMP) into pyridoxal 5'-phosphate (PLP). This is Pyridoxine/pyridoxamine 5'-phosphate oxidase from Shewanella woodyi (strain ATCC 51908 / MS32).